Consider the following 701-residue polypeptide: Polyribonucleotide nucleotidyltransferase (701 aa).

Mg(2+)-binding residues include aspartate 487 and aspartate 493. Residues 554–613 enclose the KH domain; that stretch reads PTMLAMKIDQDKIRDVIGKGGATIRAICEETKASIDIEDDGSIKIFGETKEAAEAAKQRV. In terms of domain architecture, S1 motif spans 623-691; it reads GKIYVGKVER…NRGRIKLSIK (69 aa).

It belongs to the polyribonucleotide nucleotidyltransferase family. As to quaternary structure, component of the RNA degradosome, which is a multiprotein complex involved in RNA processing and mRNA degradation. It depends on Mg(2+) as a cofactor.

The protein resides in the cytoplasm. The catalysed reaction is RNA(n+1) + phosphate = RNA(n) + a ribonucleoside 5'-diphosphate. Involved in mRNA degradation. Catalyzes the phosphorolysis of single-stranded polyribonucleotides processively in the 3'- to 5'-direction. The polypeptide is Polyribonucleotide nucleotidyltransferase (Stutzerimonas stutzeri (strain A1501) (Pseudomonas stutzeri)).